Consider the following 170-residue polypeptide: uncharacterized protein (170 aa).

The N-terminal stretch at 1 to 26 (MLKKKWMVGLLAGCLAAGGFSYNAFA) is a signal peptide.

This is an uncharacterized protein from Bacillus subtilis (strain 168).